A 152-amino-acid polypeptide reads, in one-letter code: Endoribonuclease YbeY (152 aa).

Zn(2+) contacts are provided by histidine 113, histidine 117, and histidine 123.

It belongs to the endoribonuclease YbeY family. Requires Zn(2+) as cofactor.

The protein localises to the cytoplasm. Single strand-specific metallo-endoribonuclease involved in late-stage 70S ribosome quality control and in maturation of the 3' terminus of the 16S rRNA. The sequence is that of Endoribonuclease YbeY from Paracidovorax citrulli (strain AAC00-1) (Acidovorax citrulli).